We begin with the raw amino-acid sequence, 238 residues long: Ribonuclease HII (238 aa).

The RNase H type-2 domain occupies 12 to 197 (GIVAGVDEAG…VLELLTDDLL (186 aa)). Positions 18, 19, and 107 each coordinate a divalent metal cation.

The protein belongs to the RNase HII family. It depends on Mn(2+) as a cofactor. Mg(2+) is required as a cofactor.

It localises to the cytoplasm. It catalyses the reaction Endonucleolytic cleavage to 5'-phosphomonoester.. Functionally, endonuclease that specifically degrades the RNA of RNA-DNA hybrids. The chain is Ribonuclease HII from Thermotoga petrophila (strain ATCC BAA-488 / DSM 13995 / JCM 10881 / RKU-1).